Reading from the N-terminus, the 342-residue chain is UDP-N-acetylglucosamine--N-acetylmuramyl-(pentapeptide) pyrophosphoryl-undecaprenol N-acetylglucosamine transferase (342 aa).

Residues 10-12 (TGG), Asn-124, Ser-177, and Gln-275 each bind UDP-N-acetyl-alpha-D-glucosamine.

The protein belongs to the glycosyltransferase 28 family. MurG subfamily.

It is found in the cell inner membrane. The enzyme catalyses di-trans,octa-cis-undecaprenyl diphospho-N-acetyl-alpha-D-muramoyl-L-alanyl-D-glutamyl-meso-2,6-diaminopimeloyl-D-alanyl-D-alanine + UDP-N-acetyl-alpha-D-glucosamine = di-trans,octa-cis-undecaprenyl diphospho-[N-acetyl-alpha-D-glucosaminyl-(1-&gt;4)]-N-acetyl-alpha-D-muramoyl-L-alanyl-D-glutamyl-meso-2,6-diaminopimeloyl-D-alanyl-D-alanine + UDP + H(+). The protein operates within cell wall biogenesis; peptidoglycan biosynthesis. Functionally, cell wall formation. Catalyzes the transfer of a GlcNAc subunit on undecaprenyl-pyrophosphoryl-MurNAc-pentapeptide (lipid intermediate I) to form undecaprenyl-pyrophosphoryl-MurNAc-(pentapeptide)GlcNAc (lipid intermediate II). This chain is UDP-N-acetylglucosamine--N-acetylmuramyl-(pentapeptide) pyrophosphoryl-undecaprenol N-acetylglucosamine transferase, found in Campylobacter jejuni (strain RM1221).